The following is a 774-amino-acid chain: MKNKLRQIKENREKYRKLKEEELREKTKQLKERAKQESLEELMVEAYSNVWEGAARVLKLEAYDVQLIGAMVLNKGQIAEMKTGEGKSLVAAFASYLNALSGKGVHIVTVNDYLAKRDERWIGEVLRYLGLKTAVITNESSREERKKGYEADVTYITNSELGFDYLRDHMAWSKEEIVQREFNYCIIDEVDSILIDEARTPLIISGPTKGSEKPYKVAWEIGKRMKEGEDYELEEKSKQVILKEKGIKRCEEALEVKDIFSMETPWAHYVMNAIKAKHFYIKDVNYIIKEGEVVIVDEFTGRIMGGRRWADGLHQAIEAKEGVKIQEESETLASITYQNLFLLYPKLAGMTGTAKTEEEEFEQIYGLKVVSIPTHRKMKRKDYPDVVYRTSRSKWMAVAEECERMWTKGRPVLVGTTSIEKSELLARLLEEKGVKYKLLNARPSLAADEASIIAQAGKIGSITIATNMAGRGTDIILGGNIKEAFGEWIKERKKQVDIEEEWRKVLEGKADEESEKKYKQLKEEHEKEQKRVKQLGGLYVIGTERHESRRIDNQLRGRSGRQGDEGSSRFFISLEDDLLRIFGGGQMGEIMSRLGVEEPLESAFLSKSLDRAQKKVENYYYQMRKQLFEYDQVLNSQRKAIYKERTDILRSEEVGEWSKSYIRKEWPGGLLGIKRGMRNRSEVEISYDVKKMQMESVQAGLMNELERLLLLQQIDKSWSKHLKEMSLLREFIAWRGYAQRDPLVEYKNESYNLFIKMIEEIRQGYAYSLFRSQA.

ATP contacts are provided by residues Gln-66, 84–88 (GEGKS), and Asp-474.

This sequence belongs to the SecA family.

The protein resides in the plastid. It is found in the chloroplast stroma. Its subcellular location is the chloroplast thylakoid membrane. It carries out the reaction ATP + H2O + cellular proteinSide 1 = ADP + phosphate + cellular proteinSide 2.. Functionally, has a central role in coupling the hydrolysis of ATP to the transfer of proteins across the thylakoid membrane. The sequence is that of Protein translocase subunit SecA from Cyanidioschyzon merolae (strain NIES-3377 / 10D) (Unicellular red alga).